The following is a 101-amino-acid chain: ATP synthase subunit f, mitochondrial (101 aa).

Residues 1–6 (MIFKRA) constitute a mitochondrion transit peptide.

It belongs to the ATPase F chain family. As to quaternary structure, F-type ATPases have 2 components, CF(1) - the catalytic core - and CF(0) - the membrane proton channel. In yeast, the dimeric form of ATP synthase consists of 17 polypeptides: alpha, beta, gamma, delta, epsilon, 4 (B), 5 (OSCP), 6 (A), 8, 9 (C), d, E (Tim11), f, g, h, i/j and k.

Its subcellular location is the mitochondrion. The protein resides in the mitochondrion inner membrane. In terms of biological role, mitochondrial membrane ATP synthase (F(1)F(0) ATP synthase or Complex V) produces ATP from ADP in the presence of a proton gradient across the membrane which is generated by electron transport complexes of the respiratory chain. F-type ATPases consist of two structural domains, F(1) - containing the extramembraneous catalytic core and F(0) - containing the membrane proton channel, linked together by a central stalk and a peripheral stalk. During catalysis, ATP synthesis in the catalytic domain of F(1) is coupled via a rotary mechanism of the central stalk subunits to proton translocation. Part of the complex F(0) domain. Minor subunit located with subunit a in the membrane. The chain is ATP synthase subunit f, mitochondrial (ATP17) from Saccharomyces cerevisiae (strain ATCC 204508 / S288c) (Baker's yeast).